A 47-amino-acid polypeptide reads, in one-letter code: MALINFDLLAELPVAYQAFAPTVDVLPLIPLFFFLLVFVWQAAVGFR.

Residues 1 to 10 (MALINFDLLA) constitute a propeptide that is removed on maturation. Residues 26–46 (LPLIPLFFFLLVFVWQAAVGF) traverse the membrane as a helical segment.

This sequence belongs to the PsbK family. In terms of assembly, PSII is composed of 1 copy each of membrane proteins PsbA, PsbB, PsbC, PsbD, PsbE, PsbF, PsbH, PsbI, PsbJ, PsbK, PsbL, PsbM, PsbT, PsbX, PsbY, Psb30/Ycf12, peripheral proteins PsbO, CyanoQ (PsbQ), PsbU, PsbV and a large number of cofactors. It forms dimeric complexes.

The protein resides in the cellular thylakoid membrane. Its function is as follows. One of the components of the core complex of photosystem II (PSII). PSII is a light-driven water:plastoquinone oxidoreductase that uses light energy to abstract electrons from H(2)O, generating O(2) and a proton gradient subsequently used for ATP formation. It consists of a core antenna complex that captures photons, and an electron transfer chain that converts photonic excitation into a charge separation. The sequence is that of Photosystem II reaction center protein K from Prochlorococcus marinus (strain NATL1A).